The sequence spans 341 residues: Large ribosomal subunit protein uL29m (341 aa).

The interval 44 to 74 is disordered; that stretch reads LARTRYTKPKPKPPRRSKVRAPTQTTHHDTD. Residues 48-62 are compositionally biased toward basic residues; it reads RYTKPKPKPPRRSKV.

The protein belongs to the universal ribosomal protein uL29 family. Component of the mitochondrial large ribosomal subunit. Mature mitochondrial ribosomes consist of a small (37S) and a large (54S) subunit. The 37S subunit contains at least 33 different proteins and 1 molecule of RNA (15S). The 54S subunit contains at least 45 different proteins and 1 molecule of RNA (21S).

The protein resides in the mitochondrion. This Eremothecium gossypii (strain ATCC 10895 / CBS 109.51 / FGSC 9923 / NRRL Y-1056) (Yeast) protein is Large ribosomal subunit protein uL29m (MRPL4).